Here is a 241-residue protein sequence, read N- to C-terminus: tRNA (guanine-N(7)-)-methyltransferase (241 aa).

Residues 1-20 (MTESNDTPIQPEAGDERQHR) are disordered. S-adenosyl-L-methionine is bound by residues Glu-71, Glu-96, Asp-123, and Asp-146. Asp-146 is a catalytic residue. Substrate is bound by residues Lys-150, Asp-182, and 219 to 222 (TKFE).

The protein belongs to the class I-like SAM-binding methyltransferase superfamily. TrmB family.

It carries out the reaction guanosine(46) in tRNA + S-adenosyl-L-methionine = N(7)-methylguanosine(46) in tRNA + S-adenosyl-L-homocysteine. It participates in tRNA modification; N(7)-methylguanine-tRNA biosynthesis. In terms of biological role, catalyzes the formation of N(7)-methylguanine at position 46 (m7G46) in tRNA. The protein is tRNA (guanine-N(7)-)-methyltransferase of Pseudomonas fluorescens (strain ATCC BAA-477 / NRRL B-23932 / Pf-5).